We begin with the raw amino-acid sequence, 344 residues long: tRNA(Ile)-lysidine synthase (344 aa).

Residue 30 to 35 coordinates ATP; it reads SGGQDS. Positions 323–344 are disordered; the sequence is PPPPAPVPPDPGERSPPPSPLY.

This sequence belongs to the tRNA(Ile)-lysidine synthase family.

It is found in the cytoplasm. The enzyme catalyses cytidine(34) in tRNA(Ile2) + L-lysine + ATP = lysidine(34) in tRNA(Ile2) + AMP + diphosphate + H(+). Ligates lysine onto the cytidine present at position 34 of the AUA codon-specific tRNA(Ile) that contains the anticodon CAU, in an ATP-dependent manner. Cytidine is converted to lysidine, thus changing the amino acid specificity of the tRNA from methionine to isoleucine. This Thermosynechococcus vestitus (strain NIES-2133 / IAM M-273 / BP-1) protein is tRNA(Ile)-lysidine synthase.